Consider the following 84-residue polypeptide: Cell division topological specificity factor (84 aa).

The protein belongs to the MinE family.

Its function is as follows. Prevents the cell division inhibition by proteins MinC and MinD at internal division sites while permitting inhibition at polar sites. This ensures cell division at the proper site by restricting the formation of a division septum at the midpoint of the long axis of the cell. In Pseudomonas entomophila (strain L48), this protein is Cell division topological specificity factor.